The sequence spans 292 residues: 1D-myo-inositol 2-acetamido-2-deoxy-alpha-D-glucopyranoside deacetylase (292 aa).

Zn(2+) is bound by residues histidine 12, aspartate 15, and histidine 147.

The protein belongs to the MshB deacetylase family. Zn(2+) is required as a cofactor.

It carries out the reaction 1D-myo-inositol 2-acetamido-2-deoxy-alpha-D-glucopyranoside + H2O = 1D-myo-inositol 2-amino-2-deoxy-alpha-D-glucopyranoside + acetate. In terms of biological role, catalyzes the deacetylation of 1D-myo-inositol 2-acetamido-2-deoxy-alpha-D-glucopyranoside (GlcNAc-Ins) in the mycothiol biosynthesis pathway. This is 1D-myo-inositol 2-acetamido-2-deoxy-alpha-D-glucopyranoside deacetylase from Rhodococcus opacus (strain B4).